We begin with the raw amino-acid sequence, 1165 residues long: uncharacterized protein (1165 aa).

The segment at 422–442 (EAAPPRPPRKSKAPEPTGDKA) is disordered.

This is an uncharacterized protein from Frog virus 3 (isolate Goorha) (FV-3).